The following is a 65-amino-acid chain: Large ribosomal subunit protein bL35 (65 aa).

Residues 1–22 (MPKMKTKSSAKKRFKVTGSGKI) form a disordered region.

It belongs to the bacterial ribosomal protein bL35 family.

The sequence is that of Large ribosomal subunit protein bL35 from Flavobacterium johnsoniae (strain ATCC 17061 / DSM 2064 / JCM 8514 / BCRC 14874 / CCUG 350202 / NBRC 14942 / NCIMB 11054 / UW101) (Cytophaga johnsonae).